We begin with the raw amino-acid sequence, 269 residues long: Subtilisin Savinase (269 aa).

Glutamine 2 lines the Ca(2+) pocket. In terms of domain architecture, Peptidase S8 spans 5 to 268 (PWGISRVQAP…SGLVNAEAAT (264 aa)). The Charge relay system role is filled by aspartate 32. Residue aspartate 40 coordinates Ca(2+). Histidine 62 functions as the Charge relay system in the catalytic mechanism. Leucine 73, asparagine 75, isoleucine 77, valine 79, alanine 163, tyrosine 165, and alanine 168 together coordinate Ca(2+). Serine 215 serves as the catalytic Charge relay system.

The protein belongs to the peptidase S8 family. It depends on Ca(2+) as a cofactor.

It localises to the secreted. It catalyses the reaction Hydrolysis of proteins with broad specificity for peptide bonds, and a preference for a large uncharged residue in P1. Hydrolyzes peptide amides.. Functionally, subtilisin is an extracellular alkaline serine protease, it catalyzes the hydrolysis of proteins and peptide amides. This Lederbergia lenta (Bacillus lentus) protein is Subtilisin Savinase.